The sequence spans 129 residues: Protein BEX2 (129 aa).

Residues Met1–Ile37 are disordered. Residues Glu15–Pro36 show a composition bias toward basic and acidic residues. Position 51 is an omega-N-methylarginine (Arg51). The interval His118 to His122 is his cluster. Cys126 serves as a coordination point for Zn(2+).

The protein belongs to the BEX family. Interacts with LMO2, possibly leading to regulate the transcriptional activity of a DNA-binding complex containing LMO2. Interacts with OMP. As to expression, primarily localized to neuronal cells within several regions of the brain, including the olfactory epithelium, bulb, peri/paraventricular nuclei, suprachiasmatic nucleus, arcuate nucleus, median eminence, lateral hypothalamic area, thalamus, hippocampus and cerebellum (at protein level).

Its subcellular location is the cytoplasm. It is found in the nucleus. Functionally, regulator of mitochondrial apoptosis and G1 cell cycle. Regulates the level of PP2A regulatory subunit B and PP2A phosphatase activity. In absence of reductive stress, acts as a pseudosubstrate for the CRL2(FEM1B) complex: associates with FEM1B via zinc, thereby preventing association between FEM1B and its substrates. This chain is Protein BEX2, found in Mus musculus (Mouse).